A 515-amino-acid chain; its full sequence is Maturase K (515 aa).

It belongs to the intron maturase 2 family. MatK subfamily.

It is found in the plastid. It localises to the chloroplast. In terms of biological role, usually encoded in the trnK tRNA gene intron. Probably assists in splicing its own and other chloroplast group II introns. This is Maturase K from Pinus tabuliformis (Chinese red pine).